Here is a 212-residue protein sequence, read N- to C-terminus: Adenylate kinase (212 aa).

Glycine 14–threonine 19 contacts ATP. Residues serine 34–valine 63 form an NMP region. AMP is bound by residues threonine 35, arginine 40, serine 61–valine 63, glycine 89–arginine 92, and glutamine 96. An LID region spans residues glutamine 126–aspartate 163. Residue arginine 127 participates in ATP binding. Cysteine 130 and cysteine 133 together coordinate Zn(2+). Position 136–137 (serine 136–tyrosine 137) interacts with ATP. The Zn(2+) site is built by cysteine 150 and aspartate 153. Residues arginine 160 and arginine 171 each coordinate AMP. Glutamine 199 is a binding site for ATP.

The protein belongs to the adenylate kinase family. Monomer.

It is found in the cytoplasm. It carries out the reaction AMP + ATP = 2 ADP. It participates in purine metabolism; AMP biosynthesis via salvage pathway; AMP from ADP: step 1/1. In terms of biological role, catalyzes the reversible transfer of the terminal phosphate group between ATP and AMP. Plays an important role in cellular energy homeostasis and in adenine nucleotide metabolism. The chain is Adenylate kinase from Mesomycoplasma hyopneumoniae (strain J / ATCC 25934 / NCTC 10110) (Mycoplasma hyopneumoniae).